A 372-amino-acid chain; its full sequence is Peptidyl-prolyl cis-trans isomerase D (372 aa).

The region spanning 10–173 (FFDIQIGQQQ…TDVTIAECGE (164 aa)) is the PPIase cyclophilin-type domain. Positions 174 to 193 (LTGEDYDNADKQTPDATGDP) are disordered. 3 TPR repeats span residues 215–248 (ASEL…LNEF), 268–304 (FTLH…ASAK), and 309–342 (AKVY…APSD).

Belongs to the cyclophilin-type PPIase family. PPIase D subfamily.

The protein localises to the cytoplasm. The enzyme catalyses [protein]-peptidylproline (omega=180) = [protein]-peptidylproline (omega=0). Its function is as follows. PPIases accelerate the folding of proteins. It catalyzes the cis-trans isomerization of proline imidic peptide bonds in oligopeptides. This is Peptidyl-prolyl cis-trans isomerase D (cpr6) from Emericella nidulans (strain FGSC A4 / ATCC 38163 / CBS 112.46 / NRRL 194 / M139) (Aspergillus nidulans).